The primary structure comprises 162 residues: MNISATARSLLLQEFVSAFFLAMRYFFKPKPTLNYPFEKGPISPRFRGEHALRRYPNGEERCIACKLCEAVCPAQAITIEAGPRRNDGTRRTVRYDIDMVKCIYCGLCQEACPVDAIVEGPNFEFATETREELYYDKAKLLANGDRWEREISKAIALDAPYR.

2 consecutive 4Fe-4S ferredoxin-type domains span residues 52-82 and 93-122; these read LRRY…IEAG and VRYD…EGPN. The [4Fe-4S] cluster site is built by C62, C65, C68, C72, C102, C105, C108, and C112.

Belongs to the complex I 23 kDa subunit family. In terms of assembly, NDH-1 is composed of 14 different subunits. Subunits NuoA, H, J, K, L, M, N constitute the membrane sector of the complex. It depends on [4Fe-4S] cluster as a cofactor.

It is found in the cell inner membrane. The enzyme catalyses a quinone + NADH + 5 H(+)(in) = a quinol + NAD(+) + 4 H(+)(out). Its function is as follows. NDH-1 shuttles electrons from NADH, via FMN and iron-sulfur (Fe-S) centers, to quinones in the respiratory chain. The immediate electron acceptor for the enzyme in this species is believed to be ubiquinone. Couples the redox reaction to proton translocation (for every two electrons transferred, four hydrogen ions are translocated across the cytoplasmic membrane), and thus conserves the redox energy in a proton gradient. The polypeptide is NADH-quinone oxidoreductase subunit I (Bradyrhizobium sp. (strain ORS 278)).